We begin with the raw amino-acid sequence, 284 residues long: Tropomyosin (284 aa).

Positions 1-280 form a coiled coil; that stretch reads MDAIKKKMQA…SDELDQTFAE (280 aa).

This sequence belongs to the tropomyosin family. In terms of assembly, homodimer.

Functionally, tropomyosin, in association with the troponin complex, plays a central role in the calcium dependent regulation of muscle contraction. In Sinonovacula constricta (Razor clam), this protein is Tropomyosin.